A 569-amino-acid polypeptide reads, in one-letter code: Beta-galactoside-specific lectin 3 (569 aa).

A signal peptide spans methionine 1–serine 33. Glutamate 198 is an active-site residue. Intrachain disulfides connect cysteine 280–cysteine 311, cysteine 327–cysteine 346, and cysteine 370–cysteine 387. Residues glutamate 288–aspartate 307 constitute a propeptide, connecting peptide. The 128-residue stretch at serine 314–glycine 441 folds into the Ricin B-type lectin 1 domain. Aspartate 329–arginine 331 contributes to the D-galactose binding site. 2 N-linked (GlcNAc...) asparagine glycosylation sites follow: asparagine 402 and asparagine 442. A Ricin B-type lectin 2 domain is found at alanine 445–valine 568. 2 disulfide bridges follow: cysteine 458-cysteine 471 and cysteine 497-cysteine 514. Residue aspartate 541–alanine 543 participates in D-galactose binding.

Belongs to the ribosome-inactivating protein family. Type 2 RIP subfamily. As to quaternary structure, disulfide-linked dimer of A and B chains.

The enzyme catalyses Endohydrolysis of the N-glycosidic bond at one specific adenosine on the 28S rRNA.. Its function is as follows. The A chain is responsible for inhibiting protein synthesis through the catalytic inactivation of 60S ribosomal subunits by removing adenine from position 4,324 of 28S rRNA. The B chain binds to cell receptors and probably facilitates the entry into the cell of the A chain; B chains are also responsible for cell agglutination (lectin activity). Inhibits growth of the human tumor cell line Molt4. The protein is Beta-galactoside-specific lectin 3 of Viscum album (European mistletoe).